Reading from the N-terminus, the 489-residue chain is MEEGKMDENEWSYHGEGNKSLVVAHAQRCVVLRFLKFPPNKKKTSEEILQHLQNIVDFGKNVMKDFLGENYVHCGEVVQLPLEFVKQLCLKIQCERPESRCDKDLDTFSGYAMCLPNLTRLQTFHFAEHRPILCVEIKPKCGFIPFSNDVTHEMKHKVCRYCMHQHLKVATGKWKKISKYCPLDLYSGNKQRMHFALRSLLQETQNNLRIFKNGELIYGCGDARSPVADLKELAHHLKPFFFPSNGLASGPHCTKAVIRELVHVITRVLLSSSEKARAGALRLGLQGPRVCEASPFSRSLHNQGKNTSEHSGLPKGCLLYKTLQVQMLDQLDIEGLYPLYKRVEQYLEEFPEERKTLQIDGPYDEVFYQKLLDLSTEDDGTVAFALTKVQQYRVAMTAKDCSIMIALSPCLQGTSSDQRPVIPSSRSRLAFSVSVLDLDLKPYESIPHQYKLDSKIVNYYSKTVHAKDDTVRSTRFKEHEDCTLVLHKV.

Residues 136-140 (EIKPK) carry the EXKPK motif motif.

This sequence belongs to the IPK1 type 2 family. As to expression, in brain, it is expressed throughout the hippocampus (CA1, CA2, CA3 and dentate gyrus), inner layers of the cerebral cortex, and Purkinje cells of the cerebellum. In heart, it is expressed in cardiomyocytes but not in interstitial cells, blood vessels, or valves. Also expressed in testis.

Its subcellular location is the cytoplasm. It localises to the nucleus. It catalyses the reaction 1D-myo-inositol 1,3,4,5,6-pentakisphosphate + ATP = 1D-myo-inositol hexakisphosphate + ADP + H(+). Functionally, phosphorylates Ins(1,3,4,5,6)P5 at position 2 to form Ins(1,2,3,4,5,6)P6 (InsP6 or phytate). InsP6 is involved in many processes such as mRNA export, non-homologous end-joining, endocytosis, ion channel regulation. It also protects cells from TNF-alpha-induced apoptosis. In Mus musculus (Mouse), this protein is Inositol-pentakisphosphate 2-kinase (Ippk).